The following is a 229-amino-acid chain: Large ribosomal subunit protein uL1 (229 aa).

Belongs to the universal ribosomal protein uL1 family. In terms of assembly, part of the 50S ribosomal subunit.

In terms of biological role, binds directly to 23S rRNA. The L1 stalk is quite mobile in the ribosome, and is involved in E site tRNA release. Functionally, protein L1 is also a translational repressor protein, it controls the translation of the L11 operon by binding to its mRNA. The polypeptide is Large ribosomal subunit protein uL1 (Caulobacter vibrioides (strain ATCC 19089 / CIP 103742 / CB 15) (Caulobacter crescentus)).